A 292-amino-acid chain; its full sequence is Ribosomal protein L11 methyltransferase (292 aa).

The S-adenosyl-L-methionine site is built by Thr-136, Gly-159, Asp-181, and Asn-228.

This sequence belongs to the methyltransferase superfamily. PrmA family.

It localises to the cytoplasm. It carries out the reaction L-lysyl-[protein] + 3 S-adenosyl-L-methionine = N(6),N(6),N(6)-trimethyl-L-lysyl-[protein] + 3 S-adenosyl-L-homocysteine + 3 H(+). Methylates ribosomal protein L11. This is Ribosomal protein L11 methyltransferase from Rhizobium leguminosarum bv. trifolii (strain WSM2304).